Consider the following 254-residue polypeptide: Hemin import ATP-binding protein HmuV (254 aa).

An ABC transporter domain is found at 2 to 239 (LNINQVNINL…DTLSQVWHYD (238 aa)). 34–41 (GPNGAGKS) is a binding site for ATP.

This sequence belongs to the ABC transporter superfamily. Heme (hemin) importer (TC 3.A.1.14.5) family. The complex is composed of two ATP-binding proteins (HmuV), two transmembrane proteins (HmuU) and a solute-binding protein (HmuT).

The protein localises to the cell inner membrane. Part of the ABC transporter complex HmuTUV involved in hemin import. Responsible for energy coupling to the transport system. The sequence is that of Hemin import ATP-binding protein HmuV from Shewanella denitrificans (strain OS217 / ATCC BAA-1090 / DSM 15013).